The following is a 360-amino-acid chain: Biotin synthase 2 (360 aa).

The region spanning 53-280 (RRVKLNFLVN…TAEVRLSGGR (228 aa)) is the Radical SAM core domain. [4Fe-4S] cluster is bound by residues Cys-68, Cys-72, and Cys-75. Residues Cys-112, Cys-145, Cys-205, and Arg-275 each coordinate [2Fe-2S] cluster.

It belongs to the radical SAM superfamily. Biotin synthase family. In terms of assembly, homodimer. It depends on [4Fe-4S] cluster as a cofactor. The cofactor is [2Fe-2S] cluster.

The catalysed reaction is (4R,5S)-dethiobiotin + (sulfur carrier)-SH + 2 reduced [2Fe-2S]-[ferredoxin] + 2 S-adenosyl-L-methionine = (sulfur carrier)-H + biotin + 2 5'-deoxyadenosine + 2 L-methionine + 2 oxidized [2Fe-2S]-[ferredoxin]. It participates in cofactor biosynthesis; biotin biosynthesis; biotin from 7,8-diaminononanoate: step 2/2. Catalyzes the conversion of dethiobiotin (DTB) to biotin by the insertion of a sulfur atom into dethiobiotin via a radical-based mechanism. This Frankia casuarinae (strain DSM 45818 / CECT 9043 / HFP020203 / CcI3) protein is Biotin synthase 2.